Here is a 169-residue protein sequence, read N- to C-terminus: Alpha-S2-casein-like B (169 aa).

Residues 1–15 (MKFIILTCLLAVALA) form the signal peptide.

It belongs to the alpha-casein family. In terms of tissue distribution, mammary gland specific. Secreted in milk.

The protein resides in the secreted. Important role in the capacity of milk to transport calcium phosphate. The chain is Alpha-S2-casein-like B (Csn1s2b) from Rattus norvegicus (Rat).